The sequence spans 160 residues: Snaclec subunit A (160 aa).

Positions 1 to 23 (MGRFILVNLGLLVVAFSLRGSEA) are cleaved as a signal peptide. 3 cysteine pairs are disulfide-bonded: Cys-25/Cys-36, Cys-53/Cys-150, and Cys-125/Cys-142. In terms of domain architecture, C-type lectin spans 32–151 (YDKYCYKVFD…CDFTLPFICK (120 aa)).

Belongs to the snaclec family. As to quaternary structure, heterodimer of subunits A and B; disulfide-linked. Expressed by the venom gland.

Its subcellular location is the secreted. In terms of biological role, interferes with one step of hemostasis (modulation of platelet aggregation, or coagulation cascade, for example). The protein is Snaclec subunit A of Philodryas olfersii (Green snake).